Here is a 127-residue protein sequence, read N- to C-terminus: Large ribosomal subunit protein bL19 (127 aa).

This sequence belongs to the bacterial ribosomal protein bL19 family.

Functionally, this protein is located at the 30S-50S ribosomal subunit interface and may play a role in the structure and function of the aminoacyl-tRNA binding site. The sequence is that of Large ribosomal subunit protein bL19 from Acidovorax ebreus (strain TPSY) (Diaphorobacter sp. (strain TPSY)).